A 445-amino-acid chain; its full sequence is Argininosuccinate synthase (445 aa).

ATP is bound by residues 17-25 (AFSGGLDTS) and Ala-43. Tyr-99 serves as a coordination point for L-citrulline. ATP-binding residues include Gly-129 and Thr-131. Positions 131, 135, and 136 each coordinate L-aspartate. Asn-135 is an L-citrulline binding site. Asp-136 provides a ligand contact to ATP. L-citrulline-binding residues include Arg-139 and Ser-192. Asp-194 is a binding site for ATP. Residues Thr-201, Glu-203, and Glu-280 each coordinate L-citrulline.

This sequence belongs to the argininosuccinate synthase family. Type 2 subfamily. In terms of assembly, homotetramer.

The protein resides in the cytoplasm. The enzyme catalyses L-citrulline + L-aspartate + ATP = 2-(N(omega)-L-arginino)succinate + AMP + diphosphate + H(+). It participates in amino-acid biosynthesis; L-arginine biosynthesis; L-arginine from L-ornithine and carbamoyl phosphate: step 2/3. This chain is Argininosuccinate synthase, found in Burkholderia cenocepacia (strain HI2424).